The primary structure comprises 39 residues: Photosystem II reaction center protein L (39 aa).

Residues 18–38 (SLYLGLLFVFVTGVLMSSYFF) traverse the membrane as a helical segment.

This sequence belongs to the PsbL family. In terms of assembly, PSII is composed of 1 copy each of membrane proteins PsbA, PsbB, PsbC, PsbD, PsbE, PsbF, PsbH, PsbI, PsbJ, PsbK, PsbL, PsbM, PsbT, PsbX, PsbY, PsbZ, Psb30/Ycf12, peripheral proteins PsbO, CyanoQ (PsbQ), PsbU, PsbV and a large number of cofactors. It forms dimeric complexes.

It localises to the cellular thylakoid membrane. In terms of biological role, one of the components of the core complex of photosystem II (PSII). PSII is a light-driven water:plastoquinone oxidoreductase that uses light energy to abstract electrons from H(2)O, generating O(2) and a proton gradient subsequently used for ATP formation. It consists of a core antenna complex that captures photons, and an electron transfer chain that converts photonic excitation into a charge separation. This subunit is found at the monomer-monomer interface and is required for correct PSII assembly and/or dimerization. The chain is Photosystem II reaction center protein L from Synechococcus sp. (strain CC9605).